The primary structure comprises 446 residues: tRNA-2-methylthio-N(6)-dimethylallyladenosine synthase (446 aa).

The MTTase N-terminal domain occupies lysine 3–serine 120. Residues cysteine 12, cysteine 49, cysteine 83, cysteine 157, cysteine 161, and cysteine 164 each contribute to the [4Fe-4S] cluster site. The region spanning lysine 143 to arginine 375 is the Radical SAM core domain. The 67-residue stretch at aspartate 378 to valine 444 folds into the TRAM domain.

It belongs to the methylthiotransferase family. MiaB subfamily. As to quaternary structure, monomer. [4Fe-4S] cluster is required as a cofactor.

The protein resides in the cytoplasm. It catalyses the reaction N(6)-dimethylallyladenosine(37) in tRNA + (sulfur carrier)-SH + AH2 + 2 S-adenosyl-L-methionine = 2-methylsulfanyl-N(6)-dimethylallyladenosine(37) in tRNA + (sulfur carrier)-H + 5'-deoxyadenosine + L-methionine + A + S-adenosyl-L-homocysteine + 2 H(+). Its function is as follows. Catalyzes the methylthiolation of N6-(dimethylallyl)adenosine (i(6)A), leading to the formation of 2-methylthio-N6-(dimethylallyl)adenosine (ms(2)i(6)A) at position 37 in tRNAs that read codons beginning with uridine. This chain is tRNA-2-methylthio-N(6)-dimethylallyladenosine synthase, found in Herminiimonas arsenicoxydans.